A 709-amino-acid polypeptide reads, in one-letter code: MISNLRISNYFIIFYVLFLIIPIKVTSIHFVDSQHNVILILTDDQDIELGSMDFMPKTSQIMKERGTEFTSGYVTTPICCPSRSTILTGLYVHNHHVHTNNQNCTGVEWRKVHEKKSIGVYLQEAGYRTAYLGKYLNEYDGSYIPPGWDEWHAIVKNSKFYNYTMNSNGEREKFGSEYEKDYFTDLVTNRSLKFIDKHIKIRAWQPFALIISYPAPHGPEDPAPQFAHMFENEISHRTGSWNFAPNPDKQWLLQRTGKMNDVHISFTDLLHRRRLQTLQSVDEGIERLFNLLRELNQLWNTYAIYTSDHGYHLGQFGLLKGKNMPYEFDIRVPFFMRGPGIPRNVTFNEIVTNVDIAPTMLHIAGVPKPARMNGRSLLELVALKKKKKKHMTALKPWRDTILIERGKMPKLKKIRDRYIKQKKKFNKENRLSKECKRRKWQRDCVHGQLWKCYYTVEDRWRIYKCRDNWSDQCSCRKKREISNYDDDDIDEFLTYADRENFSEGHEWYQGEFEDSGEVGEELDGHRSKRGILSKCSCSRNVSHPIKLLEQKMSKKHYLKYKKKPQNGSLKPKDCSLPQMNCFTHTASHWKTPPLWPEELGEFCFCQNCNNNTYWCLRTKNETHNFLYCEFVTEFISFYDFNTDPDQLINAVYSLDIGVLEQLSEQLRNLRKCKNRQCEIWSTSQMLRSPKLVDLRVNEKSFLTYQPEKT.

The first 27 residues, 1–27 (MISNLRISNYFIIFYVLFLIIPIKVTS), serve as a signal peptide directing secretion. Positions 43, 44, and 79 each coordinate Ca(2+). Cysteine 79 acts as the Nucleophile in catalysis. The residue at position 79 (cysteine 79) is a 3-oxoalanine (Cys). N-linked (GlcNAc...) asparagine glycans are attached at residues asparagine 103, asparagine 162, and asparagine 189. Residues aspartate 308 and histidine 309 each coordinate Ca(2+). Asparagine 344, asparagine 468, asparagine 500, asparagine 540, asparagine 566, asparagine 610, and asparagine 620 each carry an N-linked (GlcNAc...) asparagine glycan.

This sequence belongs to the sulfatase family. Ca(2+) serves as cofactor. In terms of processing, the conversion to 3-oxoalanine (also known as C-formylglycine, FGly), of a serine or cysteine residue in prokaryotes and of a cysteine residue in eukaryotes, is critical for catalytic activity.

The protein localises to the endoplasmic reticulum. The protein resides in the golgi apparatus. It is found in the golgi stack. Its subcellular location is the cell surface. This Caenorhabditis elegans protein is Putative extracellular sulfatase Sulf-1 homolog (sul-1).